A 343-amino-acid polypeptide reads, in one-letter code: Adenosine kinase (343 aa).

Asp-296 is a catalytic residue.

Belongs to the carbohydrate kinase PfkB family. It depends on Mg(2+) as a cofactor.

The catalysed reaction is adenosine + ATP = AMP + ADP + H(+). It participates in purine metabolism; AMP biosynthesis via salvage pathway; AMP from adenosine: step 1/1. Its function is as follows. ATP dependent phosphorylation of adenosine and other related nucleoside analogs to monophosphate derivatives. Can also act on the cytokinin isopentenyladenosine to produce isopentenyladenosine monophosphate. This is Adenosine kinase (ADK) from Physcomitrium patens (Spreading-leaved earth moss).